The primary structure comprises 962 residues: Putative primase C962R (962 aa).

Residues 607 to 775 (ELDARLWIMF…PDPNNSYEKK (169 aa)) form the SF3 helicase domain. 636–643 (GGGCNGKT) serves as a coordination point for ATP.

The protein belongs to the asfivirus helicase C962R family.

In Ornithodoros (relapsing fever ticks), this protein is Putative primase C962R.